The primary structure comprises 294 residues: 4-hydroxy-tetrahydrodipicolinate synthase (294 aa).

Residue T47 participates in pyruvate binding. Y136 (proton donor/acceptor) is an active-site residue. K164 functions as the Schiff-base intermediate with substrate in the catalytic mechanism. A pyruvate-binding site is contributed by V206.

The protein belongs to the DapA family. Homotetramer; dimer of dimers.

The protein resides in the cytoplasm. It catalyses the reaction L-aspartate 4-semialdehyde + pyruvate = (2S,4S)-4-hydroxy-2,3,4,5-tetrahydrodipicolinate + H2O + H(+). Its pathway is amino-acid biosynthesis; L-lysine biosynthesis via DAP pathway; (S)-tetrahydrodipicolinate from L-aspartate: step 3/4. Functionally, catalyzes the condensation of (S)-aspartate-beta-semialdehyde [(S)-ASA] and pyruvate to 4-hydroxy-tetrahydrodipicolinate (HTPA). The chain is 4-hydroxy-tetrahydrodipicolinate synthase from Nostoc sp. (strain PCC 7120 / SAG 25.82 / UTEX 2576).